A 276-amino-acid polypeptide reads, in one-letter code: UPF0328 protein ECU03_0010 (276 aa).

2 disordered regions span residues 1–132 (MAAP…PIIS) and 156–176 (SFCQ…NMVH). A compositionally biased stretch (basic and acidic residues) spans 106–126 (HTEGCHTHEANPEPNTKHTET).

Belongs to the UPF0328 family.

The sequence is that of UPF0328 protein ECU03_0010 from Encephalitozoon cuniculi (strain GB-M1) (Microsporidian parasite).